Reading from the N-terminus, the 427-residue chain is MSIGDELVDADEVYRQARWKNQFEVLSKLPRVLQERVDAQKPVIEASGNSATPSNASRALVRHQQNPGDVGLVLNKKFADEQGHESVIERHDKLLNQTPRWHAPWHLTRVIHGHHGWVRCIAMDKVDNEWFATGSNDKTIKIWNLASGKLKVTLKAHDMTVRDLAISNRHPYMFSVSEDKTVKCWDLEKNTAIRNYHGHLSGVHTVDIHPTVDVVVTAGRDSVVKVWDIRTRLPVMTLPGHKGPITKVRCLPVDPQVISSSVDASIRLWDLVAGKSMKVLTHHQRTVRDISVHPSEFSFASACTNDIRSWLLPKGELLTNFVSQDLDVINTVSINQDDVLFAGSDNGSLTFFDYKSGHKYQTFKTKEAPGSPESERGILSSTFDGTGLRLLTGETDRTIKIWKQDETASQDTHPNLPWNPKLDSQRL.

7 WD repeats span residues 113–153 (GHHG…LKVT), 156–195 (AHDM…AIRN), 198–237 (GHLS…PVMT), 240–281 (GHKG…KVLT), 283–322 (HQRT…TNFV), 324–362 (QDLD…KYQT), and 373–412 (ESER…SQDT). The segment at 404-427 (QDETASQDTHPNLPWNPKLDSQRL) is disordered.

The protein belongs to the WD repeat PRL1/PRL2 family. Associated with the spliceosome.

Its subcellular location is the cytoplasm. It localises to the nucleus. Functionally, involved in pre-mRNA splicing and required for cell cycle progression at G2/M. In Candida glabrata (strain ATCC 2001 / BCRC 20586 / JCM 3761 / NBRC 0622 / NRRL Y-65 / CBS 138) (Yeast), this protein is Pre-mRNA-splicing factor PRP46 (PRP46).